We begin with the raw amino-acid sequence, 436 residues long: Methylenetetrahydrofolate--tRNA-(uracil-5-)-methyltransferase TrmFO (436 aa).

FAD is bound at residue 10 to 15 (GAGLAG).

The protein belongs to the MnmG family. TrmFO subfamily. FAD serves as cofactor.

Its subcellular location is the cytoplasm. It catalyses the reaction uridine(54) in tRNA + (6R)-5,10-methylene-5,6,7,8-tetrahydrofolate + NADH + H(+) = 5-methyluridine(54) in tRNA + (6S)-5,6,7,8-tetrahydrofolate + NAD(+). It carries out the reaction uridine(54) in tRNA + (6R)-5,10-methylene-5,6,7,8-tetrahydrofolate + NADPH + H(+) = 5-methyluridine(54) in tRNA + (6S)-5,6,7,8-tetrahydrofolate + NADP(+). Its function is as follows. Catalyzes the folate-dependent formation of 5-methyl-uridine at position 54 (M-5-U54) in all tRNAs. This chain is Methylenetetrahydrofolate--tRNA-(uracil-5-)-methyltransferase TrmFO, found in Staphylococcus carnosus (strain TM300).